A 61-amino-acid chain; its full sequence is Photosystem II reaction center X protein (61 aa).

Residues 26 to 46 (IGSFIAAALLIVVPATAFLIF) traverse the membrane as a helical segment.

It belongs to the PsbX family. Type 2 subfamily. In terms of assembly, PSII consists of a core antenna complex that captures photons, and an electron transfer chain that converts photonic excitation into a charge separation. PSII forms dimeric complexes.

It localises to the cellular thylakoid membrane. Functionally, involved in the binding and/or turnover of quinones at the Q(B) site of Photosystem II. The sequence is that of Photosystem II reaction center X protein from Prochlorococcus marinus (strain AS9601).